The primary structure comprises 69 residues: Disintegrin VLO5B (69 aa).

The region spanning M1–E66 is the Disintegrin domain. 4 cysteine pairs are disulfide-bonded: C7–C30, C21–C27, C26–C51, and C39–C58. A Cell attachment site; atypical (MLD) motif is present at residues M43 to D45.

It belongs to the disintegrin family. Dimeric disintegrin subfamily. Heterodimer with VLO5A; disulfide-linked. Expressed by the venom gland.

It is found in the secreted. Functionally, poor inhibitor of platelet aggregation. The disintegrin inhibits the adhesion of the alpha-4/beta-1 (ITGA4/ITGB1) integrin to VCAM-1. Inhibition on alpha-2b/beta-3 (ITGA2B/ITGB3) is low. This Macrovipera lebetina obtusa (Levant blunt-nosed viper) protein is Disintegrin VLO5B.